A 98-amino-acid chain; its full sequence is MPSISINITLAFTMALTGMLVFRSHLMSSLLCLEGMMLSMFILSILFIMNMHFTVSFIMPILLLVLAACEAAIGLALLVMVSNTYGLDYVQNLNLLQC.

The next 3 helical transmembrane spans lie at 2–22 (PSIS…MLVF), 29–49 (SLLC…LFIM), and 61–81 (ILLL…LVMV).

It belongs to the complex I subunit 4L family. In terms of assembly, core subunit of respiratory chain NADH dehydrogenase (Complex I) which is composed of 45 different subunits.

The protein resides in the mitochondrion inner membrane. It carries out the reaction a ubiquinone + NADH + 5 H(+)(in) = a ubiquinol + NAD(+) + 4 H(+)(out). Functionally, core subunit of the mitochondrial membrane respiratory chain NADH dehydrogenase (Complex I) which catalyzes electron transfer from NADH through the respiratory chain, using ubiquinone as an electron acceptor. Part of the enzyme membrane arm which is embedded in the lipid bilayer and involved in proton translocation. The sequence is that of NADH-ubiquinone oxidoreductase chain 4L (MT-ND4L) from Lepilemur mitsinjoensis (Mitsinjo sportive lemur).